The sequence spans 217 residues: Translation initiation factor IF-3 (217 aa).

The disordered stretch occupies residues 170–217 (KKTEAMAEARQAQEARKADAKANPGKSQNAAETDDAEAEAPAEAPAEA). The segment covering 172–189 (TEAMAEARQAQEARKADA) has biased composition (basic and acidic residues).

It belongs to the IF-3 family. As to quaternary structure, monomer.

It localises to the cytoplasm. Functionally, IF-3 binds to the 30S ribosomal subunit and shifts the equilibrium between 70S ribosomes and their 50S and 30S subunits in favor of the free subunits, thus enhancing the availability of 30S subunits on which protein synthesis initiation begins. This is Translation initiation factor IF-3 from Streptomyces coelicolor (strain ATCC BAA-471 / A3(2) / M145).